The primary structure comprises 387 residues: TSC22 domain family protein 4 (387 aa).

Disordered regions lie at residues 1–85 and 135–232; these read MSGG…GEPY and ISTP…RRDG. Pro residues predominate over residues 31–51; that stretch reads PVPPALAGPPPRLPNGDPNPD. Residue T57 is modified to Phosphothreonine. A phosphoserine mark is found at S62 and S165. T183 carries the phosphothreonine modification. S187, S189, and S219 each carry phosphoserine. A Phosphothreonine modification is found at T223. Residues S254, S258, and S271 each carry the phosphoserine modification. The leucine-zipper stretch occupies residues 336 to 357; the sequence is LKEQIRDLAERNAALEQENGLL. S362 bears the Phosphoserine mark. The segment at 368–387 is disordered; the sequence is QLPSSGLPRLGPSAPNGPSI.

This sequence belongs to the TSC-22/Dip/Bun family. Forms a homodimer or heterodimer. Forms a heterodimer with TSC22D1 isoforms 1 and 2. Interacts with NRBP1. Expressed in the liver (at protein level). Expressed in Purkinje cells and proliferating cerebellar granular neurons (at protein level). Expressed in the cortex, medulla and papilla of the kidney.

It localises to the nucleus. The protein localises to the cytoplasm. The protein resides in the cell projection. Its subcellular location is the dendrite. It is found in the synapse. Its function is as follows. Binds DNA and acts as a transcriptional repressor. Involved in the regulation of systematic glucose homeostasis and insulin sensitivity, via transcriptional repression of downstream insulin signaling targets such as OBP2A/LCN13. Acts as a negative regulator of lipogenic gene expression in hepatocytes and thereby mediates the control of very low-density lipoprotein release. May play a role in neurite elongation and survival. The chain is TSC22 domain family protein 4 from Mus musculus (Mouse).